Reading from the N-terminus, the 120-residue chain is Succinate dehydrogenase assembly factor 3, mitochondrial (120 aa).

Residues 1–36 constitute a mitochondrion transit peptide; it reads MSRILMSQLTHPQRVRLLYKTILRLHRGLPAELRAL.

The protein belongs to the complex I LYR family. SDHAF3 subfamily. In terms of assembly, interacts with SdhB within an SdhA-SdhB subcomplex.

Its subcellular location is the mitochondrion matrix. Plays an essential role in the assembly of succinate dehydrogenase (SDH), an enzyme complex (also referred to as respiratory complex II) that is a component of both the tricarboxylic acid (TCA) cycle and the mitochondrial electron transport chain, and which couples the oxidation of succinate to fumarate with the reduction of ubiquinone (coenzyme Q) to ubiquinol. Promotes maturation of the iron-sulfur protein subunit SdhB of the SDH catalytic dimer, protecting it from the deleterious effects of oxidants. This Drosophila melanogaster (Fruit fly) protein is Succinate dehydrogenase assembly factor 3, mitochondrial.